Reading from the N-terminus, the 383-residue chain is Acetylornithine deacetylase (383 aa).

Histidine 80 contacts Zn(2+). Aspartate 82 is a catalytic residue. Residue aspartate 112 coordinates Zn(2+). Residue glutamate 144 is part of the active site. Residues glutamate 145, glutamate 169, and histidine 355 each coordinate Zn(2+).

The protein belongs to the peptidase M20A family. ArgE subfamily. Homodimer. Zn(2+) is required as a cofactor. The cofactor is Co(2+). It depends on glutathione as a cofactor.

The protein resides in the cytoplasm. The catalysed reaction is N(2)-acetyl-L-ornithine + H2O = L-ornithine + acetate. Its pathway is amino-acid biosynthesis; L-arginine biosynthesis; L-ornithine from N(2)-acetyl-L-ornithine (linear): step 1/1. Functionally, catalyzes the hydrolysis of the amide bond of N(2)-acetylated L-amino acids. Cleaves the acetyl group from N-acetyl-L-ornithine to form L-ornithine, an intermediate in L-arginine biosynthesis pathway, and a branchpoint in the synthesis of polyamines. The sequence is that of Acetylornithine deacetylase from Salmonella typhimurium (strain LT2 / SGSC1412 / ATCC 700720).